A 483-amino-acid chain; its full sequence is Altronate oxidoreductase (483 aa).

18 to 29 contributes to the NAD(+) binding site; sequence IIQFGEGNFLRA.

The protein belongs to the mannitol dehydrogenase family. UxaB subfamily.

It carries out the reaction D-altronate + NAD(+) = keto-D-tagaturonate + NADH + H(+). It functions in the pathway carbohydrate metabolism; pentose and glucuronate interconversion. This chain is Altronate oxidoreductase, found in Enterobacter sp. (strain 638).